Consider the following 429-residue polypeptide: Dihydroorotase (429 aa).

Positions 62 and 64 each coordinate Zn(2+). Substrate-binding positions include His-64–Arg-66 and Asn-96. Positions 154, 181, and 234 each coordinate Zn(2+). Residue Asn-280 coordinates substrate. Asp-307 contacts Zn(2+). The active site involves Asp-307. Substrate is bound by residues His-311 and Phe-325 to Gly-326.

Belongs to the metallo-dependent hydrolases superfamily. DHOase family. Class I DHOase subfamily. It depends on Zn(2+) as a cofactor.

The catalysed reaction is (S)-dihydroorotate + H2O = N-carbamoyl-L-aspartate + H(+). The protein operates within pyrimidine metabolism; UMP biosynthesis via de novo pathway; (S)-dihydroorotate from bicarbonate: step 3/3. In terms of biological role, catalyzes the reversible cyclization of carbamoyl aspartate to dihydroorotate. The chain is Dihydroorotase from Latilactobacillus sakei subsp. sakei (strain 23K) (Lactobacillus sakei subsp. sakei).